Consider the following 386-residue polypeptide: Patatin-17 (386 aa).

The signal sequence occupies residues 1-23; it reads MATTKSFLILIFMILATTSSTFA. Residues 32–229 enclose the PNPLA domain; that stretch reads LSIDGGGIRG…TVADPALLSI (198 aa). Positions 36–41 match the GXGXXG motif; that stretch reads GGGIRG. The GXSXG signature appears at 75–79; sequence GTSTG. The active-site Nucleophile is serine 77. N-linked (GlcNAc...) asparagine glycosylation is present at asparagine 202. Aspartate 215 functions as the Proton acceptor in the catalytic mechanism. The DGA/G signature appears at 215–217; it reads DGA. A coiled-coil region spans residues 321 to 384; that stretch reads ENALTGTTTE…DRKKLRANKA (64 aa).

The protein belongs to the patatin family.

It localises to the vacuole. Non-specific lipolytic acyl hydrolase (LAH), an activity which is thought to be involved in the response of tubers to pathogens. Catalyzes the non-specific hydrolysis of phospholipids, glycolipids, sulfolipids, and mono- and diacylglycerols includng p-nitrophenyl caprate. Confers resistance to southern corn rootworm (SCRW). This is Patatin-17 from Solanum cardiophyllum (Heartleaf nightshade).